Consider the following 118-residue polypeptide: Ribonuclease P protein component (118 aa).

The protein belongs to the RnpA family. In terms of assembly, consists of a catalytic RNA component (M1 or rnpB) and a protein subunit.

The catalysed reaction is Endonucleolytic cleavage of RNA, removing 5'-extranucleotides from tRNA precursor.. RNaseP catalyzes the removal of the 5'-leader sequence from pre-tRNA to produce the mature 5'-terminus. It can also cleave other RNA substrates such as 4.5S RNA. The protein component plays an auxiliary but essential role in vivo by binding to the 5'-leader sequence and broadening the substrate specificity of the ribozyme. In Enterococcus faecalis (strain ATCC 700802 / V583), this protein is Ribonuclease P protein component.